The chain runs to 203 residues: Large ribosomal subunit protein bL25 (203 aa).

It belongs to the bacterial ribosomal protein bL25 family. CTC subfamily. As to quaternary structure, part of the 50S ribosomal subunit; part of the 5S rRNA/L5/L18/L25 subcomplex. Contacts the 5S rRNA. Binds to the 5S rRNA independently of L5 and L18.

Its function is as follows. This is one of the proteins that binds to the 5S RNA in the ribosome where it forms part of the central protuberance. This chain is Large ribosomal subunit protein bL25, found in Cupriavidus metallidurans (strain ATCC 43123 / DSM 2839 / NBRC 102507 / CH34) (Ralstonia metallidurans).